Here is a 321-residue protein sequence, read N- to C-terminus: Serine/threonine-protein phosphatase 4 catalytic subunit 2 (321 aa).

Mn(2+)-binding residues include Asp64, His66, Asp92, and Asn124. The active-site Proton donor is the His125. Mn(2+) is bound by residues His174 and His249.

This sequence belongs to the PPP phosphatase family. PP-4 (PP-X) subfamily. In terms of assembly, serine/threonine-protein phosphatase 4 (PP4) occurs in different assemblies of the catalytic and one or more regulatory subunits. Mn(2+) is required as a cofactor.

It carries out the reaction O-phospho-L-seryl-[protein] + H2O = L-seryl-[protein] + phosphate. The enzyme catalyses O-phospho-L-threonyl-[protein] + H2O = L-threonyl-[protein] + phosphate. Protein phosphatase which seems to be involved in larval development but not essential for embryogenesis. This is Serine/threonine-protein phosphatase 4 catalytic subunit 2 from Caenorhabditis elegans.